The chain runs to 123 residues: Potassium voltage-gated channel subfamily E member 2 (123 aa).

N6 and N29 each carry an N-linked (GlcNAc...) asparagine glycan. The chain crosses the membrane as a helical span at residues 49–69; the sequence is VILYLMVMIGMFSFIIVAILV. Residues 70–123 are Cytoplasmic-facing; that stretch reads STVKSKRREHSNDPYHQYIVEDWQEKYKSQILNLEESKATIHENIGAAGFKMSP.

It belongs to the potassium channel KCNE family. Interacts with KCNB1. Associates with KCNH2/ERG1. May associate with KCNQ2 and KCNQ3. Associates with HCN1 and probably HCN2. Heteromultimer with KCNC2. Interacts with KCNC2. Interacts with KCNQ1; forms a heterooligomer complex that targets to the membrane raft and leading to currents with an apparently instantaneous activation, a rapid deactivation process and a linear current-voltage relationship and decreases the amplitude of the outward current. In terms of tissue distribution, highly expressed in brain, heart, skeletal muscle, pancreas, placenta, kidney, colon and thymus. A small but significant expression is found in liver, ovary, testis, prostate, small intestine and leukocytes. Very low expression, nearly undetectable, in lung and spleen.

The protein resides in the cell membrane. Its subcellular location is the apical cell membrane. Its function is as follows. Ancillary protein that functions as a regulatory subunit of the voltage-gated potassium (Kv) channel complex composed of pore-forming and potassium-conducting alpha subunits and of regulatory beta subunits. KCNE2 beta subunit modulates the gating kinetics and enhances stability of the channel complex. Alters the gating of the delayed rectifier Kv channel containing KCNB1 alpha subunit. Associates with KCNH2/HERG alpha subunit Kv channel to form the rapidly activating component of the delayed rectifying potassium current (IKr) in heart. May associate with KCNQ2 and/or KCNQ3 alpha subunits to modulate the native M-type current. May associate with HCN1 and HCN2 channel subunits to increase potassium current. Forms a heterooligomer complex with KCNQ1/KVLQT1 alpha subunits which leads to currents with an apparently instantaneous activation, a rapid deactivation process and a linear current-voltage relationship and decreases the amplitude of the outward current. KCNQ1-KCNE2 channel associates with Na(+)-coupled myo-inositol symporter in the apical membrane of choroid plexus epithelium and regulates the myo-inositol gradient between blood and cerebrospinal fluid with an impact on neuron excitability. The polypeptide is Potassium voltage-gated channel subfamily E member 2 (Homo sapiens (Human)).